The sequence spans 172 residues: Peptide methionine sulfoxide reductase MsrA (172 aa).

Cysteine 14 is a catalytic residue.

It belongs to the MsrA Met sulfoxide reductase family.

It catalyses the reaction L-methionyl-[protein] + [thioredoxin]-disulfide + H2O = L-methionyl-(S)-S-oxide-[protein] + [thioredoxin]-dithiol. The catalysed reaction is [thioredoxin]-disulfide + L-methionine + H2O = L-methionine (S)-S-oxide + [thioredoxin]-dithiol. In terms of biological role, has an important function as a repair enzyme for proteins that have been inactivated by oxidation. Catalyzes the reversible oxidation-reduction of methionine sulfoxide in proteins to methionine. This chain is Peptide methionine sulfoxide reductase MsrA, found in Streptomyces coelicolor (strain ATCC BAA-471 / A3(2) / M145).